The sequence spans 155 residues: Ribonuclease H (155 aa).

The RNase H type-1 domain maps to 4-145; the sequence is DISKVVIYTD…ADKLAVQGRQ (142 aa). Positions 13, 51, 73, and 137 each coordinate Mg(2+).

Belongs to the RNase H family. Monomer. Mg(2+) serves as cofactor.

It localises to the cytoplasm. It catalyses the reaction Endonucleolytic cleavage to 5'-phosphomonoester.. Its function is as follows. Endonuclease that specifically degrades the RNA of RNA-DNA hybrids. In Rickettsia bellii (strain RML369-C), this protein is Ribonuclease H.